The chain runs to 335 residues: Twinfilin (335 aa).

ADF-H domains are found at residues 4–140 (SSGI…QHKL) and 176–316 (GISF…NELH). The interval 307–335 (SEESIINELHPPKVEEKKAFSKPSRPGRK) is disordered. Residues 316 to 325 (HPPKVEEKKA) are compositionally biased toward basic and acidic residues.

This sequence belongs to the actin-binding proteins ADF family. Twinfilin subfamily. In terms of assembly, interacts with G-actin; ADP-actin form.

It localises to the cytoplasm. The protein resides in the cytoskeleton. It is found in the cell cortex. Its function is as follows. Actin-binding protein involved in motile and morphological processes. Inhibits actin polymerization, likely by sequestering G-actin. This Dictyostelium discoideum (Social amoeba) protein is Twinfilin (twfA).